An 87-amino-acid chain; its full sequence is HssA/B-like protein 54 (87 aa).

It belongs to the hssA/B family.

The chain is HssA/B-like protein 54 (hssl54) from Dictyostelium discoideum (Social amoeba).